Consider the following 512-residue polypeptide: Chlorogenic acid esterase (512 aa).

Residues 1–18 (MLLRLCIIATLLVSHCVA) form the signal peptide. N-linked (GlcNAc...) asparagine glycosylation is found at asparagine 47, asparagine 80, and asparagine 98. A disulfide bridge connects residues cysteine 92 and cysteine 120. Serine 230 (acyl-ester intermediate) is an active-site residue. N-linked (GlcNAc...) asparagine glycosylation is present at asparagine 271. An intrachain disulfide couples cysteine 281 to cysteine 292. 3 N-linked (GlcNAc...) asparagine glycosylation sites follow: asparagine 295, asparagine 322, and asparagine 328. The Charge relay system role is filled by glutamate 351. N-linked (GlcNAc...) asparagine glycans are attached at residues asparagine 391 and asparagine 402. Histidine 416 acts as the Charge relay system in catalysis. N-linked (GlcNAc...) asparagine glycosylation occurs at asparagine 474.

Belongs to the type-B carboxylesterase/lipase family.

It is found in the secreted. The catalysed reaction is chlorogenate + H2O = L-quinate + (E)-caffeate + H(+). Functionally, extracellular chlorogenic acid esterase that releases caffeic acid from chlorogenic acid (CGA) contained in natural substrates such as apple marc and coffee pulp. Shows no activity towards 5-O-p-coumaroyl quinic acid, another quinic ester derivative, and rosmarinic acid, another caffeic ester derivative. This Aspergillus niger protein is Chlorogenic acid esterase.